The following is a 125-amino-acid chain: Small ribosomal subunit protein uS12 (125 aa).

Position 89 is a 3-methylthioaspartic acid (aspartate 89).

Belongs to the universal ribosomal protein uS12 family. In terms of assembly, part of the 30S ribosomal subunit. Contacts proteins S8 and S17. May interact with IF1 in the 30S initiation complex.

Functionally, with S4 and S5 plays an important role in translational accuracy. Its function is as follows. Interacts with and stabilizes bases of the 16S rRNA that are involved in tRNA selection in the A site and with the mRNA backbone. Located at the interface of the 30S and 50S subunits, it traverses the body of the 30S subunit contacting proteins on the other side and probably holding the rRNA structure together. The combined cluster of proteins S8, S12 and S17 appears to hold together the shoulder and platform of the 30S subunit. This is Small ribosomal subunit protein uS12 from Clostridium botulinum (strain Alaska E43 / Type E3).